A 1085-amino-acid polypeptide reads, in one-letter code: Voltage-dependent calcium channel subunit alpha-2/delta-3 (1085 aa).

An N-terminal signal peptide occupies residues 1–33 (MAGPGSLCCASRGASALLATALLYAALGDVVRS). The Extracellular segment spans residues 34 to 1062 (EQQIPLSVVK…HPEENARECG (1029 aa)). A glycan (N-linked (GlcNAc...) asparagine) is linked at asparagine 166. A VWFA domain is found at 256–438 (DVVILVDVSG…ENVMEYLHVL (183 aa)). Aspartate 262, serine 264, and serine 266 together coordinate a divalent metal cation. The MIDAS-like motif motif lies at 262–266 (DVSGS). Asparagine 309 carries an N-linked (GlcNAc...) asparagine glycan. An intrachain disulfide couples cysteine 412 to cysteine 1049. The Cache domain occupies 452 to 543 (WTEAYIDSTL…RPLYEEGKKR (92 aa)). N-linked (GlcNAc...) asparagine glycosylation is found at asparagine 547 and asparagine 626. Tyrosine 918 is subject to Phosphotyrosine. Residues 1063–1083 (GASSLQAQVALLLLPLVSSLF) traverse the membrane as a helical segment. At 1084–1085 (SR) the chain is on the cytoplasmic side.

The protein belongs to the calcium channel subunit alpha-2/delta family. As to quaternary structure, dimer formed of alpha-2-2 and delta-2 chains; disulfide-linked. Voltage-dependent calcium channels are multisubunit complexes, consisting of alpha-1 (CACNA1), alpha-2 (CACNA2D), beta (CACNB) and delta (CACNA2D) subunits in a 1:1:1:1 ratio. In terms of processing, N-glycosylated. May be proteolytically processed into subunits alpha-2-3 and delta-3 that are disulfide-linked. It is however unclear whether such cleavage really takes place in vivo and has a functional role. As to expression, in heart, it is expressed in atrium but not in ventricle.

It is found in the membrane. Its function is as follows. The alpha-2/delta subunit of voltage-dependent calcium channels regulates calcium current density and activation/inactivation kinetics of the calcium channel. Acts as a regulatory subunit for P/Q-type calcium channel (CACNA1A), N-type (CACNA1B), L-type (CACNA1C OR CACNA1D) but not T-type (CACNA1G). The sequence is that of Voltage-dependent calcium channel subunit alpha-2/delta-3 (Cacna2d3) from Rattus norvegicus (Rat).